Here is a 261-residue protein sequence, read N- to C-terminus: Taurine import ATP-binding protein TauB (261 aa).

Residues 4 to 233 (LQLERIGAQY…RYAAGESARA (230 aa)) form the ABC transporter domain. 38-45 (GPSGSGKT) serves as a coordination point for ATP.

It belongs to the ABC transporter superfamily. Taurine importer (TC 3.A.1.17.1) family. The complex is composed of two ATP-binding proteins (TauB), two transmembrane proteins (TauC) and a solute-binding protein (TauA).

It localises to the cell inner membrane. It catalyses the reaction taurine(out) + ATP + H2O = taurine(in) + ADP + phosphate + H(+). Part of the ABC transporter complex TauABC involved in taurine import. Responsible for energy coupling to the transport system. The sequence is that of Taurine import ATP-binding protein TauB from Pseudomonas savastanoi pv. phaseolicola (strain 1448A / Race 6) (Pseudomonas syringae pv. phaseolicola (strain 1448A / Race 6)).